The sequence spans 127 residues: Glycine cleavage system H protein (127 aa).

The 83-residue stretch at 24 to 106 (TATIGITDYA…YAEGWMLKLK (83 aa)) folds into the Lipoyl-binding domain. N6-lipoyllysine is present on Lys65.

The protein belongs to the GcvH family. In terms of assembly, the glycine cleavage system is composed of four proteins: P, T, L and H. It depends on (R)-lipoate as a cofactor.

The glycine cleavage system catalyzes the degradation of glycine. The H protein shuttles the methylamine group of glycine from the P protein to the T protein. This chain is Glycine cleavage system H protein, found in Opitutus terrae (strain DSM 11246 / JCM 15787 / PB90-1).